The sequence spans 166 residues: Phosphopantetheine adenylyltransferase (166 aa).

Ser9 is a binding site for substrate. ATP-binding positions include 9-10 (SY) and His17. Lys41, Ile75, and Lys89 together coordinate substrate. ATP contacts are provided by residues 90–92 (GLR), Glu100, and 124–130 (LEHISSS).

The protein belongs to the bacterial CoaD family. In terms of assembly, homohexamer. Mg(2+) is required as a cofactor.

It is found in the cytoplasm. The enzyme catalyses (R)-4'-phosphopantetheine + ATP + H(+) = 3'-dephospho-CoA + diphosphate. The protein operates within cofactor biosynthesis; coenzyme A biosynthesis; CoA from (R)-pantothenate: step 4/5. Functionally, reversibly transfers an adenylyl group from ATP to 4'-phosphopantetheine, yielding dephospho-CoA (dPCoA) and pyrophosphate. The protein is Phosphopantetheine adenylyltransferase of Bifidobacterium longum (strain DJO10A).